A 364-amino-acid chain; its full sequence is Melatonin receptor type 1B (364 aa).

The first 28 residues, 1–28, serve as a signal peptide directing secretion; the sequence is MPDNSSIANCCAASGLAARPSWPGSAEA. Topologically, residues 29–45 are extracellular; the sequence is EPPETPRAPWVAPMLST. A helical membrane pass occupies residues 46–66; it reads VVIVTTAVDFVGNLLVILSVL. The Cytoplasmic segment spans residues 67 to 81; that stretch reads RNRKLRNAGNLFVVN. Residues 82–102 form a helical membrane-spanning segment; it reads LALADLVVALYPYPLILVAIL. Residues 103–115 lie on the Extracellular side of the membrane; that stretch reads HDGWVLGEIHCKA. Cysteines 113 and 190 form a disulfide. Residues 116–136 form a helical membrane-spanning segment; it reads SAFVMGLSVIGSVFNITAIAI. The Cytoplasmic segment spans residues 137-158; the sequence is NRYWCICHSATYHRACSQWHAP. The chain crosses the membrane as a helical span at residues 159 to 179; sequence LYISLIWLLTLVALVPNFFVG. Residues 180–200 are Extracellular-facing; sequence SLEYDPRIYSCTFIQTASTQY. The chain crosses the membrane as a helical span at residues 201 to 221; the sequence is TMAVVAIHFLLPIAVVSFCYL. Over 222 to 255 the chain is Cytoplasmic; the sequence is RIWILVLQARRKAKAERKLRLRPSDLRSFLTMFA. A helical membrane pass occupies residues 256–276; sequence VFVVFAICWAPLNCIGLAVAI. At 277 to 287 the chain is on the extracellular side; it reads NPEAMALQIPE. The chain crosses the membrane as a helical span at residues 288-308; that stretch reads GLFVTSYFLAYFNSCLNAIVY. Topologically, residues 309 to 364 are cytoplasmic; that stretch reads GLLNQNFRREYKRILSALWSTGRCFHDASKCHLTEDLQGPVPPAAMATIPVQEGAL.

The protein belongs to the G-protein coupled receptor 1 family. In terms of tissue distribution, expressed in the hippocampus, kidney, and ovary.

The protein resides in the cell membrane. Functionally, high affinity receptor for melatonin. The activity of this receptor is mediated by pertussis toxin sensitive G proteins that inhibits adenylate cyclase activity. This is Melatonin receptor type 1B from Rattus norvegicus (Rat).